The following is a 105-amino-acid chain: Probable molt-inhibiting hormone (105 aa).

The signal sequence occupies residues 1–28 (MYRMPMRFWLTAVVMVVVGALLLDTASA). 3 disulfide bridges follow: Cys35–Cys72, Cys52–Cys68, and Cys55–Cys81.

The protein belongs to the arthropod CHH/MIH/GIH/VIH hormone family. Expressed in the postmolt, intermolt, and premolt stages of the shrimp eyestalks and the brain.

It localises to the secreted. Functionally, inhibits Y-organs where molting hormone (ecdysteroid) is secreted. A molting cycle is initiated when MIH secretion diminishes or stops. The chain is Probable molt-inhibiting hormone from Metapenaeus ensis (Greasyback shrimp).